Consider the following 21-residue polypeptide: 71 kDa F-actin-binding protein (21 aa).

This sequence to yeast fimbrin. Post-translationally, the N-terminus is blocked.

In terms of biological role, binds directly to F-actin and induces actin filament bundling. May function as a regulator of actin filament organization. The protein is 71 kDa F-actin-binding protein of Tetrahymena pyriformis.